The sequence spans 525 residues: Protein translocase subunit SecD (525 aa).

The next 6 membrane-spanning stretches (helical) occupy residues 9 to 29, 368 to 388, 392 to 412, 415 to 435, 460 to 480, and 487 to 507; these read LYLV…SLLG, VLIG…GFGM, LAVV…QATL, PGIA…VLIF, FSTI…LYQF, and GFAV…IFVT.

The protein belongs to the SecD/SecF family. SecD subfamily. Forms a complex with SecF. Part of the essential Sec protein translocation apparatus which comprises SecA, SecYEG and auxiliary proteins SecDF-YajC and YidC.

Its subcellular location is the cell inner membrane. Part of the Sec protein translocase complex. Interacts with the SecYEG preprotein conducting channel. SecDF uses the proton motive force (PMF) to complete protein translocation after the ATP-dependent function of SecA. This chain is Protein translocase subunit SecD, found in Magnetococcus marinus (strain ATCC BAA-1437 / JCM 17883 / MC-1).